The primary structure comprises 295 residues: 4-hydroxybenzoate octaprenyltransferase (295 aa).

Transmembrane regions (helical) follow at residues 28 to 48 (PIGI…AADG), 55 to 75 (VLIF…INDF), 103 to 123 (WALF…TDPF), 147 to 167 (LPQL…FTAA), 175 to 195 (AWLI…YYAM), 219 to 239 (AIIL…GMRL), 241 to 261 (LGPY…WEFV), and 275 to 295 (FLHN…DYGI).

It belongs to the UbiA prenyltransferase family. Requires Mg(2+) as cofactor.

Its subcellular location is the cell inner membrane. It carries out the reaction all-trans-octaprenyl diphosphate + 4-hydroxybenzoate = 4-hydroxy-3-(all-trans-octaprenyl)benzoate + diphosphate. It participates in cofactor biosynthesis; ubiquinone biosynthesis. Catalyzes the prenylation of para-hydroxybenzoate (PHB) with an all-trans polyprenyl group. Mediates the second step in the final reaction sequence of ubiquinone-8 (UQ-8) biosynthesis, which is the condensation of the polyisoprenoid side chain with PHB, generating the first membrane-bound Q intermediate 3-octaprenyl-4-hydroxybenzoate. The polypeptide is 4-hydroxybenzoate octaprenyltransferase (Azotobacter vinelandii (strain DJ / ATCC BAA-1303)).